A 156-amino-acid chain; its full sequence is Cyanate hydratase (156 aa).

Catalysis depends on residues Arg-96, Glu-99, and Ser-122.

The protein belongs to the cyanase family.

The enzyme catalyses cyanate + hydrogencarbonate + 3 H(+) = NH4(+) + 2 CO2. Its function is as follows. Catalyzes the reaction of cyanate with bicarbonate to produce ammonia and carbon dioxide. The chain is Cyanate hydratase from Pseudomonas aeruginosa (strain UCBPP-PA14).